A 306-amino-acid polypeptide reads, in one-letter code: N-acetylmuramic acid/N-acetylglucosamine kinase (306 aa).

Ser12 lines the ATP pocket. Asn35 lines the substrate pocket. An ATP-binding site is contributed by Thr124. Residues 142–144 (GWG) and Asp149 each bind substrate. Position 208 (Ala208) interacts with ATP.

This sequence belongs to the eukaryotic-type N-acetylglucosamine kinase family. Requires Mg(2+) as cofactor.

Its subcellular location is the cytoplasm. It catalyses the reaction N-acetyl-D-glucosamine + ATP = N-acetyl-D-glucosamine 6-phosphate + ADP + H(+). The enzyme catalyses N-acetyl-D-muramate + ATP = N-acetyl-D-muramate 6-phosphate + ADP + H(+). The protein operates within cell wall biogenesis; peptidoglycan recycling. Functionally, catalyzes the ATP-dependent phosphorylation of both cell wall (peptidoglycan) amino sugars, N-acetylmuramic acid (MurNAc) and N-acetylglucosamine (GlcNAc), at the 6-hydroxyl group. Neither the non-N-acetylated forms of the cell wall sugars, i.e., glucosamine and/or muramic acid, nor epimeric hexoses or 1,6-anhydro-MurNAc are substrates for the enzyme. May have a role in the rescue of the murein sugars GlcNAc and MurNAc released from muropeptides during cell wall turnover in C.acetobutylicum. The polypeptide is N-acetylmuramic acid/N-acetylglucosamine kinase (Clostridium acetobutylicum (strain ATCC 824 / DSM 792 / JCM 1419 / IAM 19013 / LMG 5710 / NBRC 13948 / NRRL B-527 / VKM B-1787 / 2291 / W)).